The sequence spans 511 residues: Maturase K (511 aa).

This sequence belongs to the intron maturase 2 family. MatK subfamily.

It is found in the plastid. Its subcellular location is the chloroplast. Usually encoded in the trnK tRNA gene intron. Probably assists in splicing its own and other chloroplast group II introns. This Anchomanes difformis (Amorphophallus difformis) protein is Maturase K.